The following is an 825-amino-acid chain: Trimethylamine-N-oxide reductase (825 aa).

The tat-type signal signal peptide spans 1–40 (MKKNNVNEQRRDFLKKTSLGVAGSALSGGMVGVVSKSAVA). Ser-187 contributes to the Mo-bis(molybdopterin guanine dinucleotide) binding site.

It belongs to the prokaryotic molybdopterin-containing oxidoreductase family. Mo-bis(molybdopterin guanine dinucleotide) is required as a cofactor. Post-translationally, predicted to be exported by the Tat system. The position of the signal peptide cleavage has not been experimentally proven.

It is found in the periplasm. It carries out the reaction trimethylamine + 2 Fe(III)-[cytochrome c] + H2O = trimethylamine N-oxide + 2 Fe(II)-[cytochrome c] + 3 H(+). Its function is as follows. Reduces trimethylamine-N-oxide (TMAO) into trimethylamine; an anaerobic reaction coupled to energy-yielding reactions. The protein is Trimethylamine-N-oxide reductase (torZ) of Haemophilus influenzae (strain ATCC 51907 / DSM 11121 / KW20 / Rd).